The chain runs to 132 residues: Protein p15 (132 aa).

May play a role in infectivity. The sequence is that of Protein p15 from Panicum mosaic virus (strain United States/Kansas 109S) (PMV).